Here is an 88-residue protein sequence, read N- to C-terminus: Acylphosphatase (88 aa).

The Acylphosphatase-like domain occupies 3–88 (AVDVLISGRV…RAGHQGFEVR (86 aa)). Catalysis depends on residues Arg18 and Asn36.

Belongs to the acylphosphatase family.

The catalysed reaction is an acyl phosphate + H2O = a carboxylate + phosphate + H(+). The polypeptide is Acylphosphatase (acyP) (Methanocella arvoryzae (strain DSM 22066 / NBRC 105507 / MRE50)).